We begin with the raw amino-acid sequence, 243 residues long: tRNA pseudouridine synthase C (243 aa).

Asp55 is a catalytic residue.

Belongs to the pseudouridine synthase RluA family.

The enzyme catalyses uridine(65) in tRNA = pseudouridine(65) in tRNA. Functionally, responsible for synthesis of pseudouridine from uracil-65 in transfer RNAs. The chain is tRNA pseudouridine synthase C (truC) from Pasteurella multocida (strain Pm70).